The chain runs to 191 residues: Orotate phosphoribosyltransferase (191 aa).

E116–S124 is a 5-phospho-alpha-D-ribose 1-diphosphate binding site. Orotate contacts are provided by T120 and R148.

The protein belongs to the purine/pyrimidine phosphoribosyltransferase family. PyrE subfamily. As to quaternary structure, homodimer. Requires Mg(2+) as cofactor.

It carries out the reaction orotidine 5'-phosphate + diphosphate = orotate + 5-phospho-alpha-D-ribose 1-diphosphate. Its pathway is pyrimidine metabolism; UMP biosynthesis via de novo pathway; UMP from orotate: step 1/2. Catalyzes the transfer of a ribosyl phosphate group from 5-phosphoribose 1-diphosphate to orotate, leading to the formation of orotidine monophosphate (OMP). The polypeptide is Orotate phosphoribosyltransferase (Heliobacterium modesticaldum (strain ATCC 51547 / Ice1)).